A 673-amino-acid chain; its full sequence is Annexin A6 (673 aa).

Residue alanine 2 is modified to N-acetylalanine. Serine 13 bears the Phosphoserine mark. Annexin repeat units lie at residues 20 to 91 (FDAN…NLMR), 92 to 163 (PLAY…VLLQ), 175 to 247 (DLVQ…AVVK), 251 to 322 (STPE…KLCG), 363 to 434 (FNPD…GLMM), 435 to 506 (PPAH…SLAT), 521 to 595 (EDAQ…AIVQ), and 599 to 670 (NKPL…ALCG). At tyrosine 30 the chain carries Phosphotyrosine. An N6-acetyllysine mark is found at lysine 63, lysine 68, lysine 75, and lysine 81. At tyrosine 201 the chain carries Phosphotyrosine. Residues lysine 306, lysine 370, and lysine 418 each carry the N6-acetyllysine modification. Position 422 is a phosphoserine (serine 422). Lysine 483 is modified (N6-acetyllysine). Serine 537 bears the Phosphoserine mark. Lysine 620 carries the N6-acetyllysine modification.

Belongs to the annexin family.

The protein resides in the cytoplasm. It localises to the melanosome. May associate with CD21. May regulate the release of Ca(2+) from intracellular stores. The chain is Annexin A6 (Anxa6) from Rattus norvegicus (Rat).